Reading from the N-terminus, the 90-residue chain is Probable Fe(2+)-trafficking protein (90 aa).

This sequence belongs to the Fe(2+)-trafficking protein family.

In terms of biological role, could be a mediator in iron transactions between iron acquisition and iron-requiring processes, such as synthesis and/or repair of Fe-S clusters in biosynthetic enzymes. This Azoarcus sp. (strain BH72) protein is Probable Fe(2+)-trafficking protein.